Consider the following 465-residue polypeptide: Antithrombin-III (465 aa).

A signal peptide spans 1-32; the sequence is MISNGIGTVTTGKRSMCLFPLLLIGLWGCVTC. 2 disulfides stabilise this stretch: cysteine 41-cysteine 161 and cysteine 54-cysteine 128. Phosphothreonine is present on threonine 64. At serine 69 the chain carries Phosphoserine. Residue tryptophan 82 coordinates heparin. Asparagine 129 is a glycosylation site (N-linked (GlcNAc...) asparagine). Arginine 162 contributes to the heparin binding site. Asparagine 168 is a glycosylation site (N-linked (GlcNAc...) asparagine). Arginine 178 contributes to the heparin binding site. N-linked (GlcNAc...) asparagine glycans are attached at residues asparagine 188 and asparagine 225. Residues cysteine 280 and cysteine 463 are joined by a disulfide bond.

This sequence belongs to the serpin family. As to quaternary structure, forms protease inhibiting heterodimer with TMPRSS7. In terms of processing, phosphorylated by FAM20C in the extracellular medium. Plasma.

It is found in the secreted. Its subcellular location is the extracellular space. Most important serine protease inhibitor in plasma that regulates the blood coagulation cascade. AT-III inhibits thrombin, matriptase-3/TMPRSS7, as well as factors IXa, Xa and XIa. Its inhibitory activity is greatly enhanced in the presence of heparin. The protein is Antithrombin-III (SERPINC1) of Ovis aries (Sheep).